The following is a 70-amino-acid chain: Small ribosomal subunit protein bS21 (70 aa).

The protein belongs to the bacterial ribosomal protein bS21 family.

This chain is Small ribosomal subunit protein bS21, found in Cupriavidus pinatubonensis (strain JMP 134 / LMG 1197) (Cupriavidus necator (strain JMP 134)).